Consider the following 374-residue polypeptide: Chaperone protein DnaJ (374 aa).

The 66-residue stretch at 5-70 (DFYEILGVGK…QKRDAYDRYG (66 aa)) folds into the J domain. Residues 29 to 50 (AMKHHPDRNPDSKGAEDKFKEA) are disordered. Residues 35–50 (DRNPDSKGAEDKFKEA) show a composition bias toward basic and acidic residues. Residues 134–212 (GYDTTIRVPS…CSGAGKIKRN (79 aa)) form a CR-type zinc finger. The Zn(2+) site is built by C147, C150, C164, C167, C186, C189, C200, and C203. 4 CXXCXGXG motif repeats span residues 147–154 (CETCDGSG), 164–171 (CTTCGGHG), 186–193 (CPKCHGSG), and 200–207 (CGTCSGAG).

It belongs to the DnaJ family. Homodimer. Zn(2+) serves as cofactor.

The protein localises to the cytoplasm. Functionally, participates actively in the response to hyperosmotic and heat shock by preventing the aggregation of stress-denatured proteins and by disaggregating proteins, also in an autonomous, DnaK-independent fashion. Unfolded proteins bind initially to DnaJ; upon interaction with the DnaJ-bound protein, DnaK hydrolyzes its bound ATP, resulting in the formation of a stable complex. GrpE releases ADP from DnaK; ATP binding to DnaK triggers the release of the substrate protein, thus completing the reaction cycle. Several rounds of ATP-dependent interactions between DnaJ, DnaK and GrpE are required for fully efficient folding. Also involved, together with DnaK and GrpE, in the DNA replication of plasmids through activation of initiation proteins. The protein is Chaperone protein DnaJ of Janthinobacterium sp. (strain Marseille) (Minibacterium massiliensis).